We begin with the raw amino-acid sequence, 467 residues long: Ethanolamine-phosphate phospho-lyase homolog 1 (467 aa).

Lysine 307 carries the post-translational modification N6-(pyridoxal phosphate)lysine.

This sequence belongs to the class-III pyridoxal-phosphate-dependent aminotransferase family. Requires pyridoxal 5'-phosphate as cofactor.

The sequence is that of Ethanolamine-phosphate phospho-lyase homolog 1 from Caenorhabditis elegans.